The primary structure comprises 336 residues: Holliday junction branch migration complex subunit RuvB (336 aa).

A large ATPase domain (RuvB-L) region spans residues 4–184; it reads ADRLISAGTT…FGIVQRLEFY (181 aa). Residues I23, R24, G65, K68, T69, T70, 131 to 133, R174, Y184, and R221 each bind ATP; that span reads EDY. T69 is a binding site for Mg(2+). A small ATPAse domain (RuvB-S) region spans residues 185 to 255; the sequence is QVPDLQYIVS…IAAQALDMLN (71 aa). The head domain (RuvB-H) stretch occupies residues 258–336; the sequence is AEGFDYMDRK…HFGITPPEMP (79 aa). The DNA site is built by R294, R313, and R318.

The protein belongs to the RuvB family. As to quaternary structure, homohexamer. Forms an RuvA(8)-RuvB(12)-Holliday junction (HJ) complex. HJ DNA is sandwiched between 2 RuvA tetramers; dsDNA enters through RuvA and exits via RuvB. An RuvB hexamer assembles on each DNA strand where it exits the tetramer. Each RuvB hexamer is contacted by two RuvA subunits (via domain III) on 2 adjacent RuvB subunits; this complex drives branch migration. In the full resolvosome a probable DNA-RuvA(4)-RuvB(12)-RuvC(2) complex forms which resolves the HJ.

It is found in the cytoplasm. The catalysed reaction is ATP + H2O = ADP + phosphate + H(+). The RuvA-RuvB-RuvC complex processes Holliday junction (HJ) DNA during genetic recombination and DNA repair, while the RuvA-RuvB complex plays an important role in the rescue of blocked DNA replication forks via replication fork reversal (RFR). RuvA specifically binds to HJ cruciform DNA, conferring on it an open structure. The RuvB hexamer acts as an ATP-dependent pump, pulling dsDNA into and through the RuvAB complex. RuvB forms 2 homohexamers on either side of HJ DNA bound by 1 or 2 RuvA tetramers; 4 subunits per hexamer contact DNA at a time. Coordinated motions by a converter formed by DNA-disengaged RuvB subunits stimulates ATP hydrolysis and nucleotide exchange. Immobilization of the converter enables RuvB to convert the ATP-contained energy into a lever motion, pulling 2 nucleotides of DNA out of the RuvA tetramer per ATP hydrolyzed, thus driving DNA branch migration. The RuvB motors rotate together with the DNA substrate, which together with the progressing nucleotide cycle form the mechanistic basis for DNA recombination by continuous HJ branch migration. Branch migration allows RuvC to scan DNA until it finds its consensus sequence, where it cleaves and resolves cruciform DNA. This Shigella boydii serotype 18 (strain CDC 3083-94 / BS512) protein is Holliday junction branch migration complex subunit RuvB.